Here is a 413-residue protein sequence, read N- to C-terminus: MPSAKSTPDTPWPVRDVNNQVKNWIERLGHLWVEGQLAQINVKPNWKLSYLTLRDVEQEVSVQLTCPTEIIRNRPTPLKDGDRVIVYGKPAFYAGRGSFSLWVTDIRPVGIGQLLARIEELRRQLAAEGLFDPARKKRLPFLPKCVGLITGRGSAAERDVLSVARDRWPEVQFKVINTAVQGASAVPEIIAALGELDQDPGVDVIIIARGGGSVEDLLPFSEEALQRAVAAAQTPVVSAIGHEPDTPILDNVADLRAATPTDAAKRVVPDVNEERLLIRQLRDRGAAALRGWVAREQQALASIRTRPVLADPMTPIVRRREEVERAVSLLRRDVNHMLRTEQSLVASLRAQVSALGPSATLARGYSVVQVVPRDGTPPQVVTTIEQTPPGSQLRIRVADGAITAAAMNTQKSD.

It belongs to the XseA family. In terms of assembly, heterooligomer composed of large and small subunits.

It is found in the cytoplasm. The catalysed reaction is Exonucleolytic cleavage in either 5'- to 3'- or 3'- to 5'-direction to yield nucleoside 5'-phosphates.. Functionally, bidirectionally degrades single-stranded DNA into large acid-insoluble oligonucleotides, which are then degraded further into small acid-soluble oligonucleotides. This chain is Exodeoxyribonuclease 7 large subunit, found in Corynebacterium efficiens (strain DSM 44549 / YS-314 / AJ 12310 / JCM 11189 / NBRC 100395).